The primary structure comprises 663 residues: UvrABC system protein B (663 aa).

The region spanning 31-271 (DNIEGGEKAQ…EQSISKIQAE (241 aa)) is the Helicase ATP-binding domain. 44 to 51 (GATGTGKT) is an ATP binding site. The short motif at 97 to 120 (YYDYYQPEAYVPSSDTYIEKDSSV) is the Beta-hairpin element. A Helicase C-terminal domain is found at 435–601 (QMDDLLGEIN…TIKKDIRDLI (167 aa)). The UVR domain maps to 627–662 (QEAIKQLQKNMQEAAELLDFELAAQLRDLILELKAM).

This sequence belongs to the UvrB family. As to quaternary structure, forms a heterotetramer with UvrA during the search for lesions. Interacts with UvrC in an incision complex.

The protein resides in the cytoplasm. Its function is as follows. The UvrABC repair system catalyzes the recognition and processing of DNA lesions. A damage recognition complex composed of 2 UvrA and 2 UvrB subunits scans DNA for abnormalities. Upon binding of the UvrA(2)B(2) complex to a putative damaged site, the DNA wraps around one UvrB monomer. DNA wrap is dependent on ATP binding by UvrB and probably causes local melting of the DNA helix, facilitating insertion of UvrB beta-hairpin between the DNA strands. Then UvrB probes one DNA strand for the presence of a lesion. If a lesion is found the UvrA subunits dissociate and the UvrB-DNA preincision complex is formed. This complex is subsequently bound by UvrC and the second UvrB is released. If no lesion is found, the DNA wraps around the other UvrB subunit that will check the other stand for damage. This Streptococcus equi subsp. equi (strain 4047) protein is UvrABC system protein B.